We begin with the raw amino-acid sequence, 70 residues long: Small ribosomal subunit protein bS21 (70 aa).

This sequence belongs to the bacterial ribosomal protein bS21 family.

In Neisseria gonorrhoeae (strain ATCC 700825 / FA 1090), this protein is Small ribosomal subunit protein bS21.